A 417-amino-acid polypeptide reads, in one-letter code: Serine hydroxymethyltransferase (417 aa).

(6S)-5,6,7,8-tetrahydrofolate-binding positions include Leu-121 and 125–127 (GHL). An N6-(pyridoxal phosphate)lysine modification is found at Lys-229. Residue 355-357 (SPF) coordinates (6S)-5,6,7,8-tetrahydrofolate.

It belongs to the SHMT family. In terms of assembly, homodimer. It depends on pyridoxal 5'-phosphate as a cofactor.

Its subcellular location is the cytoplasm. The catalysed reaction is (6R)-5,10-methylene-5,6,7,8-tetrahydrofolate + glycine + H2O = (6S)-5,6,7,8-tetrahydrofolate + L-serine. It functions in the pathway one-carbon metabolism; tetrahydrofolate interconversion. Its pathway is amino-acid biosynthesis; glycine biosynthesis; glycine from L-serine: step 1/1. Functionally, catalyzes the reversible interconversion of serine and glycine with tetrahydrofolate (THF) serving as the one-carbon carrier. This reaction serves as the major source of one-carbon groups required for the biosynthesis of purines, thymidylate, methionine, and other important biomolecules. Also exhibits THF-independent aldolase activity toward beta-hydroxyamino acids, producing glycine and aldehydes, via a retro-aldol mechanism. In Sodalis glossinidius (strain morsitans), this protein is Serine hydroxymethyltransferase.